Here is a 369-residue protein sequence, read N- to C-terminus: Cytokine receptor common subunit gamma (369 aa).

The signal sequence occupies residues 1-22 (MLKLLLSPRSFLVLQLLLLRAG). The Extracellular portion of the chain corresponds to 23–263 (WSSKVLMSSA…ENPSLFALEA (241 aa)). The cysteines at positions 62 and 72 are disulfide-linked. N-linked (GlcNAc...) asparagine glycans are attached at residues N71, N75, N84, and N96. C102 and C115 are oxidised to a cystine. The region spanning 156–254 (APENLTLSNL…VHWGSHTVEE (99 aa)) is the Fibronectin type-III domain. N159 and N164 each carry an N-linked (GlcNAc...) asparagine glycan. Positions 238–242 (WSKWS) match the WSXWS motif motif. The chain crosses the membrane as a helical span at residues 264–284 (VLIPVGTMGLIITLIFVYCWL). The Cytoplasmic segment spans residues 285 to 369 (ERMPPIPPIK…PPCYSLKPEA (85 aa)). Positions 286-294 (RMPPIPPIK) match the Box 1 motif motif.

The protein belongs to the type I cytokine receptor family. Type 5 subfamily. As to quaternary structure, the gamma subunit is common to the IL2, IL4, IL7, IL15, IL21 and probably also the IL13 receptors. Interacts with SHB upon interleukin stimulation. Interacts with IL9.

The protein localises to the cell membrane. Its subcellular location is the cell surface. Common subunit for the receptors for a variety of interleukins. Probably in association with IL15RA, involved in the stimulation of neutrophil phagocytosis by IL15. The protein is Cytokine receptor common subunit gamma (Il2rg) of Mus musculus (Mouse).